The following is a 400-amino-acid chain: Enoyl-[acyl-carrier-protein] reductase [NADH] (400 aa).

NAD(+) is bound by residues 48 to 53 (GASTGY), 74 to 75 (FE), 111 to 112 (DA), and 139 to 140 (LA). Tyrosine 225 lines the substrate pocket. Tyrosine 235 functions as the Proton donor in the catalytic mechanism. NAD(+) contacts are provided by residues lysine 244 and 273–275 (VVT).

This sequence belongs to the TER reductase family. In terms of assembly, monomer.

The catalysed reaction is a 2,3-saturated acyl-[ACP] + NAD(+) = a (2E)-enoyl-[ACP] + NADH + H(+). It functions in the pathway lipid metabolism; fatty acid biosynthesis. Its function is as follows. Involved in the final reduction of the elongation cycle of fatty acid synthesis (FAS II). Catalyzes the reduction of a carbon-carbon double bond in an enoyl moiety that is covalently linked to an acyl carrier protein (ACP). This Burkholderia vietnamiensis (strain G4 / LMG 22486) (Burkholderia cepacia (strain R1808)) protein is Enoyl-[acyl-carrier-protein] reductase [NADH].